Consider the following 136-residue polypeptide: Small ribosomal subunit protein eS17A (136 aa).

The protein belongs to the eukaryotic ribosomal protein eS17 family. Component of the small ribosomal subunit (SSU). Mature yeast ribosomes consist of a small (40S) and a large (60S) subunit. The 40S small subunit contains 1 molecule of ribosomal RNA (18S rRNA) and 33 different proteins (encoded by 57 genes). The large 60S subunit contains 3 rRNA molecules (25S, 5.8S and 5S rRNA) and 46 different proteins (encoded by 81 genes).

It is found in the cytoplasm. Functionally, component of the ribosome, a large ribonucleoprotein complex responsible for the synthesis of proteins in the cell. The small ribosomal subunit (SSU) binds messenger RNAs (mRNAs) and translates the encoded message by selecting cognate aminoacyl-transfer RNA (tRNA) molecules. The large subunit (LSU) contains the ribosomal catalytic site termed the peptidyl transferase center (PTC), which catalyzes the formation of peptide bonds, thereby polymerizing the amino acids delivered by tRNAs into a polypeptide chain. The nascent polypeptides leave the ribosome through a tunnel in the LSU and interact with protein factors that function in enzymatic processing, targeting, and the membrane insertion of nascent chains at the exit of the ribosomal tunnel. This is Small ribosomal subunit protein eS17A from Saccharomyces cerevisiae (strain ATCC 204508 / S288c) (Baker's yeast).